We begin with the raw amino-acid sequence, 142 residues long: Nucleoside diphosphate kinase (142 aa).

Positions 11, 59, 87, 93, 104, and 114 each coordinate ATP. Residue His117 is the Pros-phosphohistidine intermediate of the active site.

The protein belongs to the NDK family. In terms of assembly, homotetramer. Mg(2+) serves as cofactor.

The protein resides in the cytoplasm. It carries out the reaction a 2'-deoxyribonucleoside 5'-diphosphate + ATP = a 2'-deoxyribonucleoside 5'-triphosphate + ADP. The enzyme catalyses a ribonucleoside 5'-diphosphate + ATP = a ribonucleoside 5'-triphosphate + ADP. In terms of biological role, major role in the synthesis of nucleoside triphosphates other than ATP. The ATP gamma phosphate is transferred to the NDP beta phosphate via a ping-pong mechanism, using a phosphorylated active-site intermediate. This is Nucleoside diphosphate kinase from Hahella chejuensis (strain KCTC 2396).